The sequence spans 845 residues: Protein translocase subunit SecA 1 (845 aa).

Residues Q85, 103–107, and D492 each bind ATP; that span reads GEGKT.

The protein belongs to the SecA family. Monomer and homodimer. Part of the essential Sec protein translocation apparatus which comprises SecA, SecYEG and auxiliary proteins SecDF. Other proteins may also be involved.

Its subcellular location is the cell membrane. It is found in the cytoplasm. It carries out the reaction ATP + H2O + cellular proteinSide 1 = ADP + phosphate + cellular proteinSide 2.. Part of the Sec protein translocase complex. Interacts with the SecYEG preprotein conducting channel. Has a central role in coupling the hydrolysis of ATP to the transfer of proteins into and across the cell membrane, serving as an ATP-driven molecular motor driving the stepwise translocation of polypeptide chains across the membrane. In Corynebacterium efficiens (strain DSM 44549 / YS-314 / AJ 12310 / JCM 11189 / NBRC 100395), this protein is Protein translocase subunit SecA 1.